The following is a 97-amino-acid chain: Small ribosomal subunit protein uS19 (97 aa).

It belongs to the universal ribosomal protein uS19 family.

Its function is as follows. Protein S19 forms a complex with S13 that binds strongly to the 16S ribosomal RNA. The sequence is that of Small ribosomal subunit protein uS19 from Salinibacter ruber (strain DSM 13855 / M31).